The chain runs to 157 residues: Transcription elongation factor GreA (157 aa).

The protein belongs to the GreA/GreB family.

Its function is as follows. Necessary for efficient RNA polymerase transcription elongation past template-encoded arresting sites. The arresting sites in DNA have the property of trapping a certain fraction of elongating RNA polymerases that pass through, resulting in locked ternary complexes. Cleavage of the nascent transcript by cleavage factors such as GreA or GreB allows the resumption of elongation from the new 3'terminus. GreA releases sequences of 2 to 3 nucleotides. The sequence is that of Transcription elongation factor GreA from Hyphomonas neptunium (strain ATCC 15444).